A 512-amino-acid polypeptide reads, in one-letter code: 3-ketoacyl-CoA synthase 9 (512 aa).

Helical transmembrane passes span 44–64 (LITH…VTEI) and 83–103 (LVAF…YIMS). An FAE domain is found at 100–389 (YIMSRPRSVY…FFMTLVTKKL (290 aa)). Residues cysteine 244, histidine 323, histidine 407, histidine 411, histidine 440, and asparagine 444 contribute to the active site.

This sequence belongs to the thiolase-like superfamily. Chalcone/stilbene synthases family. Expressed in seedlings, stems, leaves, flowers and siliques. Expressed in roots, leaves, and stems, including epidermis, silique walls, sepals, the upper portion of the styles, and seed coats, but not in developing embryos.

Its subcellular location is the endoplasmic reticulum membrane. It catalyses the reaction a very-long-chain acyl-CoA + malonyl-CoA + H(+) = a very-long-chain 3-oxoacyl-CoA + CO2 + CoA. It participates in lipid metabolism; fatty acid biosynthesis. Its function is as follows. Involved in the elongation of C22 to C24 fatty acids, which are precursors for the biosynthesis of cuticular waxes, aliphatic suberins, and membrane lipids, including sphingolipids and phospholipids. The sequence is that of 3-ketoacyl-CoA synthase 9 from Arabidopsis thaliana (Mouse-ear cress).